The sequence spans 209 residues: Large ribosomal subunit protein uL3 (209 aa).

Residue Gln-150 is modified to N5-methylglutamine.

It belongs to the universal ribosomal protein uL3 family. As to quaternary structure, part of the 50S ribosomal subunit. Forms a cluster with proteins L14 and L19. In terms of processing, methylated by PrmB.

Functionally, one of the primary rRNA binding proteins, it binds directly near the 3'-end of the 23S rRNA, where it nucleates assembly of the 50S subunit. This Escherichia coli O139:H28 (strain E24377A / ETEC) protein is Large ribosomal subunit protein uL3.